Here is a 283-residue protein sequence, read N- to C-terminus: Nucleotide-binding protein ACIAD3059 (283 aa).

9-16 (GQSGSGKS) lines the ATP pocket. 59–62 (DVRS) lines the GTP pocket.

Belongs to the RapZ-like family.

Its function is as follows. Displays ATPase and GTPase activities. The sequence is that of Nucleotide-binding protein ACIAD3059 from Acinetobacter baylyi (strain ATCC 33305 / BD413 / ADP1).